The primary structure comprises 1108 residues: Serine/threonine-protein kinase AKL1 (1108 aa).

Ser2 carries the N-acetylserine modification. Ser10 carries the phosphoserine modification. The region spanning 35 to 319 is the Protein kinase domain; that stretch reads VEVVNYLAEG…IYQVLYHLCE (285 aa). ATP is bound by residues 41-49 and Lys70; that span reads LAEGGFAQI. Catalysis depends on Asp181, which acts as the Proton acceptor. The tract at residues 405 to 466 is disordered; the sequence is IPSQNVGQEL…QSPGIEDKSI (62 aa). Ser407 bears the Phosphoserine mark. Positions 419-435 are enriched in basic and acidic residues; sequence ESQSDQRKSTLSEDKSS. A compositionally biased stretch (low complexity) spans 436 to 449; the sequence is RTTSNANSSGTANN. Thr471 is modified (phosphothreonine). Polar residues predominate over residues 493–513; the sequence is KQSSDPTISEQSPRLNTQSLP. Positions 493 to 534 are disordered; that stretch reads KQSSDPTISEQSPRLNTQSLPQRQKSTSSYSSGGRSMKSTSY. Phosphoserine is present on Ser504. Positions 514-534 are enriched in low complexity; the sequence is QRQKSTSSYSSGGRSMKSTSY. 2 positions are modified to phosphoserine: Ser541 and Ser574. A compositionally biased stretch (low complexity) spans 590 to 629; it reads QQQGQRYQQAQNQTGTQGNTFPDESQYQSRVEQQQQQQDQ. Disordered stretches follow at residues 590–663 and 765–791; these read QQQG…GDSG and EDMR…HSSS. The span at 781 to 791 shows a compositional bias: polar residues; the sequence is NSANEPMHSSS. A Phosphoserine modification is found at Ser801. Residues 807–838 form a disordered region; the sequence is AGKQSFQDTNEPQTGGIEDAGGSGTIKGSNNN. Over residues 810 to 819 the composition is skewed to polar residues; the sequence is QSFQDTNEPQ. At Ser846 the chain carries Phosphoserine. The disordered stretch occupies residues 858–1108; it reads GAAVSSFSSS…SFFSVFRSEK (251 aa). A compositionally biased stretch (low complexity) spans 859–872; that stretch reads AAVSSFSSSSSSAS. The span at 910 to 934 shows a compositional bias: basic and acidic residues; sequence DDARRGKTAERRPLHNERGHKDQAR. The segment covering 935–976 has biased composition (polar residues); that stretch reads SSDASKSNQFKSKDFSSVSTRQPRQSLDLNFQEVNLSSPTLT. Ser953 and Ser960 each carry phosphoserine. Residues 1006–1048 are compositionally biased toward basic and acidic residues; that stretch reads ENKRHSTGHELSTRSNGKHETHRTGSKQRHDLERYRHSKDKDS. Glycyl lysine isopeptide (Lys-Gly) (interchain with G-Cter in ubiquitin) cross-links involve residues Lys1008 and Lys1046. Ser1048 bears the Phosphoserine mark. Positions 1049-1060 are enriched in low complexity; that stretch reads NSSITISTSTPS. Residues 1071–1082 show a composition bias toward basic and acidic residues; that stretch reads QSLDLERVRREA. Ser1072 is subject to Phosphoserine.

Belongs to the protein kinase superfamily. Ser/Thr protein kinase family.

The catalysed reaction is L-seryl-[protein] + ATP = O-phospho-L-seryl-[protein] + ADP + H(+). It carries out the reaction L-threonyl-[protein] + ATP = O-phospho-L-threonyl-[protein] + ADP + H(+). Its function is as follows. Phosphorylates SCD5. This chain is Serine/threonine-protein kinase AKL1 (AKL1), found in Saccharomyces cerevisiae (strain ATCC 204508 / S288c) (Baker's yeast).